The following is a 743-amino-acid chain: Merozoite surface protein 9 (743 aa).

The signal sequence occupies residues 1–23 (MMNMKIVLFSLLLFVIRWNIISC). An interaction with MSP1 and host SLC4A1/Band 3 region spans residues 77 to 235 (KELLKEKQYT…VNDEDDVNDE (159 aa)). 4 disordered regions span residues 202–282 (KSQG…ATAY), 459–487 (DNQA…PTED), 512–540 (NNTP…ENFD), and 666–743 (VDAL…EESK). Over residues 211 to 224 (SQNQNENNDNQKYQ) the composition is skewed to polar residues. A run of 8 repeats spans residues 226 to 231 (VNDEDD), 232 to 237 (VNDEED), 238 to 243 (TNDDED), 244 to 249 (TNDEED), 250 to 255 (TNDDED), 256 to 261 (TNDDED), 262 to 267 (TNDEED), and 268 to 273 (TNDEED). The 8 X 6 AA tandem repeats of [VT]-N-D-[ED]-[ED]-D stretch occupies residues 226 to 273 (VNDEDDVNDEEDTNDDEDTNDEEDTNDDEDTNDDEDTNDEEDTNDEED). Acidic residues predominate over residues 226–274 (VNDEDDVNDEEDTNDDEDTNDEEDTNDDEDTNDDEDTNDEEDTNDEEDH). The interval 364–528 (LKDNLINYEF…PPTQSKKKNK (165 aa)) is interaction with MSP1 and host SLC4A1/Band 3. Residues 459–473 (DNQAVDTKSMEEPKV) are compositionally biased toward basic and acidic residues. The segment covering 512 to 521 (NNTPNVVPPT) has biased composition (low complexity). The stretch at 644 to 733 (NQETEEEMEK…QEEEEEEEIV (90 aa)) forms a coiled coil. The segment covering 672–721 (KNKEEEEKEKEKEEKEKEEKEKEKEEKEKEEKEKEEKEKEEKEEEKKEKE) has biased composition (basic and acidic residues). Residues 722–733 (EEQEEEEEEEIV) are compositionally biased toward acidic residues.

The protein belongs to the plasmodium ABRA family. Forms a complex composed of MSP1, MSP6, MSP7, MSP9 and MSP3; within the complex, MSP6 and MSP9 mediate the binding to the host erythrocyte. Interacts with MSP1 subunits p19 and p42; the interaction is direct. Interacts with host SLC4A1/Band 3 protein (via the 5ABC region). MSP1 subunits p19 or p42, and MSP9 form a co-ligand complex that interacts with host SLC4A1/Band 3 protein. In terms of processing, not glycosylated.

The protein localises to the cell membrane. It localises to the parasitophorous vacuole lumen. Its subcellular location is the secreted. During the asexual blood stage, involved in the sialic acid-independent (SAID) merozoite invasion of host erythrocytes by binding to host SLC4A1/Band 3 protein on the surface of the host erythrocyte. The protein is Merozoite surface protein 9 of Plasmodium falciparum (isolate 3D7).